The sequence spans 165 residues: MKALYPGSFDPLTLGHLDLIERGASLVDELVVAVLQNPGKSPAFSLEQRLRQITASTEHLGNVSVISFDGLTVACAKEQGTRLILRGLRAMSDFEYELQIAHTNRSLAPEFETVFLTTSAHYSFLSSSVVKEVARFGGAVDHMVPRVVAEDLARFFNSAFAPPSR.

S8 provides a ligand contact to substrate. Residues 8 to 9 (SF) and H16 each bind ATP. Positions 40, 72, and 86 each coordinate substrate. Residues 87–89 (GLR), E97, and 122–128 (YSFLSSS) each bind ATP.

It belongs to the bacterial CoaD family. In terms of assembly, homohexamer. The cofactor is Mg(2+).

Its subcellular location is the cytoplasm. The catalysed reaction is (R)-4'-phosphopantetheine + ATP + H(+) = 3'-dephospho-CoA + diphosphate. Its pathway is cofactor biosynthesis; coenzyme A biosynthesis; CoA from (R)-pantothenate: step 4/5. In terms of biological role, reversibly transfers an adenylyl group from ATP to 4'-phosphopantetheine, yielding dephospho-CoA (dPCoA) and pyrophosphate. The polypeptide is Phosphopantetheine adenylyltransferase (Synechococcus sp. (strain WH7803)).